We begin with the raw amino-acid sequence, 195 residues long: 2-hydroxychromene-2-carboxylate isomerase (195 aa).

Serine 13 serves as the catalytic Nucleophile. Serine 13 is a binding site for glutathione. Substrate is bound by residues lysine 45 and 55-56; that span reads NR. 181–184 lines the glutathione pocket; that stretch reads WGND.

Belongs to the GST superfamily. NadH family. The cofactor is glutathione.

It carries out the reaction 2-hydroxychromene-2-carboxylate = (3E)-4-(2-hydroxyphenyl)-2-oxobut-3-enoate. Activated by salicylate. Involved in the naphthalene and naphthalenesulfonate catabolic pathway. Catalyzes the reversible glutathione-dependent isomerization of 2-hydroxychromene-2-carboxylate (HCCA) to trans-O-hydroxybenzylidenepyruvate (THBPA). It can also use 2-hydroxybenzo[g]chromene-2-carboxylate as substrate. The polypeptide is 2-hydroxychromene-2-carboxylate isomerase (nsaD) (Sphingobium xenophagum).